A 334-amino-acid polypeptide reads, in one-letter code: Type IV inositol polyphosphate 5-phosphatase 11 (334 aa).

2 catalytic regions span residues 206–222 and 282–297; these read DLTV…QDVS and KIRV…FKIQ.

Belongs to the inositol polyphosphate 5-phosphatase family. Expressed ubiquitously.

It is found in the cell membrane. The enzyme catalyses a 1,2-diacyl-sn-glycero-3-phospho-(1D-myo-inositol-4,5-bisphosphate) + H2O = a 1,2-diacyl-sn-glycero-3-phospho-(1D-myo-inositol 4-phosphate) + phosphate. It catalyses the reaction a 1,2-diacyl-sn-glycero-3-phospho-(1D-myo-inositol-3,4,5-trisphosphate) + H2O = a 1,2-diacyl-sn-glycero-3-phospho-(1D-myo-inositol-3,4-bisphosphate) + phosphate. Its function is as follows. Has phosphatase activity toward PtdIns(4,5)P2, and in vitro toward PtdIns(3,5)P2 and PtdIns(3,4,5)P3. Cannot dephosphorylate PtdIns(5)P, Ins(1,4,5)P3 and Ins(1,3,4,5)P4. The chain is Type IV inositol polyphosphate 5-phosphatase 11 from Arabidopsis thaliana (Mouse-ear cress).